The primary structure comprises 283 residues: MAPAMKIVFGLLTFVTVGMVIGSLLQLAFINRLEDSYGTGFPSLRGLRGQNTRYLRDVSRWANDKDAELLRIGNVKPEVVSWSPRIIVLHDFLSPEECEYLKAIARPRLQVSTVVDVKTGKGVKSDVRTSSGMFLTHVERSYPIIQAIEKRIAVFSQVPAENGELIQVLRYEPQQFYKPHHDYFADTFNLKRGGQRVATMLMYLTDDVEGGETYFPLAGDGDCTCGGKIMKGISVKPTKGDAVLFWSMGLDGQSDPRSIHGGCEVLSGEKWSATKWMRQKATS.

At 1–6 the chain is on the cytoplasmic side; it reads MAPAMK. The chain crosses the membrane as a helical; Signal-anchor for type II membrane protein span at residues 7 to 27; that stretch reads IVFGLLTFVTVGMVIGSLLQL. Residues 28 to 283 are Lumenal-facing; the sequence is AFINRLEDSY…TKWMRQKATS (256 aa). The region spanning 162–279 is the Fe2OG dioxygenase domain; that stretch reads NGELIQVLRY…KWSATKWMRQ (118 aa). Fe cation contacts are provided by histidine 180, aspartate 182, and histidine 260. Lysine 270 contributes to the 2-oxoglutarate binding site.

It belongs to the P4HA family. Fe(2+) serves as cofactor. L-ascorbate is required as a cofactor.

It localises to the endoplasmic reticulum membrane. It catalyses the reaction L-prolyl-[collagen] + 2-oxoglutarate + O2 = trans-4-hydroxy-L-prolyl-[collagen] + succinate + CO2. Catalyzes the post-translational formation of 4-hydroxyproline in -Xaa-Pro-Gly- sequences in proline-rich peptide sequences of plant glycoproteins and other proteins. Hydroxylates preferentially prolines in second positions in the -Pro-Pro-Gly-triplets. Hydroxyprolines are important constituent of many plant cell wall glycoproteins such as extensins, hydroxyproline-rich glycoproteins, lectins and arabinogalactan proteins. Can hydroxylate collagen-like peptides and hypoxia-inducible transcription factor peptides. The chain is Prolyl 4-hydroxylase 1 from Arabidopsis thaliana (Mouse-ear cress).